The primary structure comprises 510 residues: ATP synthase subunit alpha (510 aa).

ATP is bound at residue 169–176 (GDRQTGKT).

This sequence belongs to the ATPase alpha/beta chains family. In terms of assembly, F-type ATPases have 2 components, CF(1) - the catalytic core - and CF(0) - the membrane proton channel. CF(1) has five subunits: alpha(3), beta(3), gamma(1), delta(1), epsilon(1). CF(0) has three main subunits: a(1), b(2) and c(9-12). The alpha and beta chains form an alternating ring which encloses part of the gamma chain. CF(1) is attached to CF(0) by a central stalk formed by the gamma and epsilon chains, while a peripheral stalk is formed by the delta and b chains.

The protein localises to the cell inner membrane. It carries out the reaction ATP + H2O + 4 H(+)(in) = ADP + phosphate + 5 H(+)(out). Functionally, produces ATP from ADP in the presence of a proton gradient across the membrane. The alpha chain is a regulatory subunit. The polypeptide is ATP synthase subunit alpha (Rickettsia conorii (strain ATCC VR-613 / Malish 7)).